Reading from the N-terminus, the 135-residue chain is Galectin-1 (135 aa).

Ala2 is modified (N-acetylalanine). One can recognise a Galectin domain in the interval 4-135 (GLVASNLNLK…DFKIKCVAFE (132 aa)). 2 positions are modified to N6-acetyllysine: Lys13 and Lys29. Ser30 is modified (phosphoserine). A beta-D-galactoside-binding positions include 45 to 49 (HFNPR), His53, Asn62, and 69 to 72 (WGAE). Lys108 carries the post-translational modification N6-acetyllysine; alternate. N6-succinyllysine; alternate is present on Lys108. Lys128 is subject to N6-acetyllysine.

As to quaternary structure, homodimer. Binds LGALS3BP. Interacts with CD2, CD3, CD4, CD6, CD7, CD43, ALCAM and CD45. Interacts with laminin (via poly-N-acetyllactosamine). Interacts with SUSD2. Interacts with cargo receptor TMED10; the interaction mediates the translocation from the cytoplasm into the ERGIC (endoplasmic reticulum-Golgi intermediate compartment) and thereby secretion.

The protein resides in the secreted. Its subcellular location is the extracellular space. It is found in the extracellular matrix. It localises to the cytoplasm. Lectin that binds beta-galactoside and a wide array of complex carbohydrates. Plays a role in regulating apoptosis, cell proliferation and cell differentiation. Inhibits CD45 protein phosphatase activity and therefore the dephosphorylation of Lyn kinase. Strong inducer of T-cell apoptosis. This chain is Galectin-1 (LGALS1), found in Bos taurus (Bovine).